We begin with the raw amino-acid sequence, 180 residues long: Cell number regulator 7 (180 aa).

The helical transmembrane segment at 80–102 threads the bilayer; the sequence is AAAGAIYTLLACFTGFQCHWIYS.

Belongs to the cornifelin family. Expressed in roots, leaves, immature ears and silks. Detected preferentially in silks.

The protein localises to the membrane. In Zea mays (Maize), this protein is Cell number regulator 7 (CNR7).